The following is a 90-amino-acid chain: Mitochondrial import inner membrane translocase subunit Tim9 (90 aa).

Residues cysteine 24–cysteine 48 carry the Twin CX3C motif motif. Cystine bridges form between cysteine 24–cysteine 48 and cysteine 28–cysteine 44.

It belongs to the small Tim family. Heterohexamer; composed of 3 copies of tim-9/tin-9.1 and 3 copies of tim-10/tin-10, named soluble 70 kDa complex. The complex associates with the tim-22 component of the TIM22 complex. Interacts with multi-pass transmembrane proteins in transit.

Its subcellular location is the mitochondrion inner membrane. Functionally, mitochondrial intermembrane chaperone that participates in the import and insertion of multi-pass transmembrane proteins into the mitochondrial inner membrane. May also be required for the transfer of beta-barrel precursors from the TOM complex to the sorting and assembly machinery (SAM complex) of the outer membrane. Acts as a chaperone-like protein that protects the hydrophobic precursors from aggregation and guide them through the mitochondrial intermembrane space. The chain is Mitochondrial import inner membrane translocase subunit Tim9 (tin-9.1) from Caenorhabditis elegans.